The chain runs to 426 residues: Probable glucose-6-phosphate isomerase (426 aa).

E272 (proton donor) is an active-site residue. Catalysis depends on residues H293 and K404.

This sequence belongs to the GPI family.

It is found in the cytoplasm. It catalyses the reaction alpha-D-glucose 6-phosphate = beta-D-fructose 6-phosphate. The protein operates within carbohydrate biosynthesis; gluconeogenesis. It participates in carbohydrate degradation; glycolysis; D-glyceraldehyde 3-phosphate and glycerone phosphate from D-glucose: step 2/4. In terms of biological role, catalyzes the reversible isomerization of glucose-6-phosphate to fructose-6-phosphate. This Halobacterium salinarum (strain ATCC 700922 / JCM 11081 / NRC-1) (Halobacterium halobium) protein is Probable glucose-6-phosphate isomerase.